Here is a 338-residue protein sequence, read N- to C-terminus: Lipoate-protein ligase A (338 aa).

Positions 29–216 (PATQRVLFLW…AFFAHYGERV (188 aa)) constitute a BPL/LPL catalytic domain. Residues R71, 76 to 79 (GAVF), and K134 each bind ATP. K134 is a binding site for (R)-lipoate.

This sequence belongs to the LplA family. In terms of assembly, monomer.

The protein resides in the cytoplasm. The catalysed reaction is L-lysyl-[lipoyl-carrier protein] + (R)-lipoate + ATP = N(6)-[(R)-lipoyl]-L-lysyl-[lipoyl-carrier protein] + AMP + diphosphate + H(+). The protein operates within protein modification; protein lipoylation via exogenous pathway; protein N(6)-(lipoyl)lysine from lipoate: step 1/2. It participates in protein modification; protein lipoylation via exogenous pathway; protein N(6)-(lipoyl)lysine from lipoate: step 2/2. In terms of biological role, catalyzes both the ATP-dependent activation of exogenously supplied lipoate to lipoyl-AMP and the transfer of the activated lipoyl onto the lipoyl domains of lipoate-dependent enzymes. The chain is Lipoate-protein ligase A from Escherichia coli O8 (strain IAI1).